Consider the following 47-residue polypeptide: Delta-stichotoxin-Hcr3a (47 aa).

Pro3 is subject to Hydroxyproline. Cystine bridges form between Cys4–Cys44, Cys6–Cys34, and Cys27–Cys45.

It belongs to the sea anemone sodium channel inhibitory toxin family. Type I subfamily.

The protein localises to the secreted. Its subcellular location is the nematocyst. Functionally, inhibits voltage-gated sodium channels (Nav). This Radianthus crispa (Leathery sea anemone) protein is Delta-stichotoxin-Hcr3a.